The following is a 230-amino-acid chain: MNKLVKKVYGVGVGVGDKKLLTLKALEVLKKVDKIFVPVSKKGKKSIAYEIIKDYVDGKNIEELLFPMIKDKERLKKYWENALEKVLKEDGEVAIITIGDPTLYSTFSYVWKLLKERGVEVEIVNGISSIFASAAALNIPLVEGDEKLCILPQGKDLEKYIDEFDTIIIMKTKNLNEKLSVIKNRDDYIIGLVKRATFEDEKVVIGKLDEINFDEFNDYLSLAIIKRFKR.

This sequence belongs to the precorrin methyltransferase family.

The catalysed reaction is Co-precorrin-2 + S-adenosyl-L-methionine = Co-precorrin-3 + S-adenosyl-L-homocysteine + H(+). It participates in cofactor biosynthesis; adenosylcobalamin biosynthesis; cob(II)yrinate a,c-diamide from sirohydrochlorin (anaerobic route): step 2/10. In terms of biological role, methylates cobalt-precorrin-2 at the C-20 position to produce cobalt-precorrin-3A in the anaerobic cobalamin biosynthesis pathway. The protein is Probable cobalt-precorrin-2 C(20)-methyltransferase (cbiL) of Methanocaldococcus jannaschii (strain ATCC 43067 / DSM 2661 / JAL-1 / JCM 10045 / NBRC 100440) (Methanococcus jannaschii).